A 185-amino-acid polypeptide reads, in one-letter code: MSQAIMKQAEERMEKAHLSLKKELATLRAGRANVSILDPVQVDYYGSPTPLNQVANVNTPEARLILITPWDKSMVTEIEKAIQRADLGLAPSSDGTVIRLAIPPLTEDRRKELVKLVKKYTEEGKVALRNIRRDTNEQLKKQEKDGVLTEDDLRGYTEDVQTLTDKFVKVLDQTAADKEQEIMEV.

The protein belongs to the RRF family.

It localises to the cytoplasm. Responsible for the release of ribosomes from messenger RNA at the termination of protein biosynthesis. May increase the efficiency of translation by recycling ribosomes from one round of translation to another. The protein is Ribosome-recycling factor of Exiguobacterium sibiricum (strain DSM 17290 / CCUG 55495 / CIP 109462 / JCM 13490 / 255-15).